A 621-amino-acid chain; its full sequence is E3 SUMO-protein ligase PIAS2 (621 aa).

An SAP domain is found at V11–L45. The LXXLL motif signature appears at L19–L23. Residues K46 and K249 each participate in a glycyl lysine isopeptide (Lys-Gly) (interchain with G-Cter in SUMO2) cross-link. A PINIT domain is found at Q134–L299. Residues P331–D412 form an SP-RING-type zinc finger. 4 residues coordinate Zn(2+): C362, H364, C385, and C388. Glycyl lysine isopeptide (Lys-Gly) (interchain with G-Cter in SUMO2) cross-links involve residues K430, K435, K443, and K452. The tract at residues V467 to T473 is SUMO1-binding. A phosphoserine mark is found at S476, S477, and S478. Residues P484–F492 carry the Nuclear localization signal motif. K489 is covalently cross-linked (Glycyl lysine isopeptide (Lys-Gly) (interchain with G-Cter in SUMO2)). The residue at position 499 (S499) is a Phosphoserine. Residues K502 and Q562 each participate in a glycyl lysine isopeptide (Lys-Gly) (interchain with G-Cter in SUMO2) cross-link. Residues S579–S610 show a composition bias toward low complexity. The disordered stretch occupies residues S579 to D621.

This sequence belongs to the PIAS family. As to quaternary structure, binds SUMO1 and UBE2I. Interacts with AXIN1, JUN, MDM2, PARK7, TP53 and TP73 isoform alpha, but not TP73 isoform beta. Interacts with STAT4 following IL12 and IFN-alpha stimulation of T-cells. Interacts also with GTF2I, GTF2IRD1, IKFZ1, DAB2 and MSX2, as well as with several steroid receptors, including ESR1, ESR2, NR3C1, PGR, AR, and with NCOA2. Sumoylation of a target protein seems to enhance the interaction. Binds to sumoylated ELK1. Binds DNA, such as CDKN1A promoter, in a sequence-specific manner. Interacts with PLAG1. Interacts with KLF8; the interaction results in SUMO ligation and repression of KLF8 transcriptional activity and of its cell cycle progression into G(1) phase. PIAS2-beta interacts with IFIH1/MDA5. Isoform PIAS2-alpha interacts with PML (isoform PML-12). Interacts with PRDM1/Blimp-1. Sumoylated. Mainly expressed in testis. Isoform 3 is expressed predominantly in adult testis, weakly in pancreas, embryonic testis and sperm, and at very low levels in other organs.

The protein resides in the nucleus speckle. It localises to the nucleus. Its subcellular location is the PML body. The protein operates within protein modification; protein sumoylation. In terms of biological role, functions as an E3-type small ubiquitin-like modifier (SUMO) ligase, stabilizing the interaction between UBE2I and the substrate, and as a SUMO-tethering factor. Plays a crucial role as a transcriptional coregulator in various cellular pathways, including the STAT pathway, the p53 pathway and the steroid hormone signaling pathway. The effects of this transcriptional coregulation, transactivation or silencing may vary depending upon the biological context and the PIAS2 isoform studied. However, it seems to be mostly involved in gene silencing. Binds to sumoylated ELK1 and enhances its transcriptional activity by preventing recruitment of HDAC2 by ELK1, thus reversing SUMO-mediated repression of ELK1 transactivation activity. Isoform PIAS2-beta, but not isoform PIAS2-alpha, promotes MDM2 sumoylation. Isoform PIAS2-alpha promotes PARK7 sumoylation. Isoform PIAS2-beta promotes NCOA2 sumoylation more efficiently than isoform PIAS2-alpha. Isoform PIAS2-alpha sumoylates PML at'Lys-65' and 'Lys-160'. In Homo sapiens (Human), this protein is E3 SUMO-protein ligase PIAS2 (PIAS2).